The following is a 274-amino-acid chain: Undecaprenyl-diphosphatase 1 (274 aa).

8 helical membrane-spanning segments follow: residues 4–24, 45–65, 84–104, 111–131, 146–166, 186–206, 217–237, and 249–269; these read LLLLKAAIMGIVEGITEFLPI, SAVFVVAIQMGAIAAVIYEYW, HLAISLILASIPIVLVGLSFG, LFNDVAVAIGLIVGGVIIMWI, IGLKQAIWIGLIQVLSLIPGT, ATEFSFFLGIPVIIGAGLLDL, FDWSVLGVGILVSFVSALLLI, and FMVFAWYRIVSGLLILLFAYT.

It belongs to the UppP family.

It localises to the cell inner membrane. It catalyses the reaction di-trans,octa-cis-undecaprenyl diphosphate + H2O = di-trans,octa-cis-undecaprenyl phosphate + phosphate + H(+). Catalyzes the dephosphorylation of undecaprenyl diphosphate (UPP). Confers resistance to bacitracin. The chain is Undecaprenyl-diphosphatase 1 from Acinetobacter baylyi (strain ATCC 33305 / BD413 / ADP1).